Reading from the N-terminus, the 432-residue chain is 5-methylthioadenosine/S-adenosylhomocysteine deaminase (432 aa).

The Zn(2+) site is built by His62 and His64. Residues Glu91 and His184 each contribute to the substrate site. His211 contacts Zn(2+). Substrate is bound by residues Glu214 and Asp299. Asp299 contacts Zn(2+).

Belongs to the metallo-dependent hydrolases superfamily. MTA/SAH deaminase family. It depends on Zn(2+) as a cofactor.

The catalysed reaction is S-adenosyl-L-homocysteine + H2O + H(+) = S-inosyl-L-homocysteine + NH4(+). The enzyme catalyses S-methyl-5'-thioadenosine + H2O + H(+) = S-methyl-5'-thioinosine + NH4(+). In terms of biological role, catalyzes the deamination of 5-methylthioadenosine and S-adenosyl-L-homocysteine into 5-methylthioinosine and S-inosyl-L-homocysteine, respectively. Is also able to deaminate adenosine. The polypeptide is 5-methylthioadenosine/S-adenosylhomocysteine deaminase (Haloarcula marismortui (strain ATCC 43049 / DSM 3752 / JCM 8966 / VKM B-1809) (Halobacterium marismortui)).